Consider the following 446-residue polypeptide: Tubulin beta chain (446 aa).

Residues Q11, E69, S138, G142, T143, G144, N204, and N226 each coordinate GTP. A Mg(2+)-binding site is contributed by E69. A disordered region spans residues 427–446; the sequence is EAGVDEGEEFEEEEDFGDEQ. Residues 429 to 446 show a composition bias toward acidic residues; that stretch reads GVDEGEEFEEEEDFGDEQ.

It belongs to the tubulin family. In terms of assembly, dimer of alpha and beta chains. A typical microtubule is a hollow water-filled tube with an outer diameter of 25 nm and an inner diameter of 15 nM. Alpha-beta heterodimers associate head-to-tail to form protofilaments running lengthwise along the microtubule wall with the beta-tubulin subunit facing the microtubule plus end conferring a structural polarity. Microtubules usually have 13 protofilaments but different protofilament numbers can be found in some organisms and specialized cells. The cofactor is Mg(2+).

It is found in the cytoplasm. Its subcellular location is the cytoskeleton. Functionally, tubulin is the major constituent of microtubules, a cylinder consisting of laterally associated linear protofilaments composed of alpha- and beta-tubulin heterodimers. Microtubules grow by the addition of GTP-tubulin dimers to the microtubule end, where a stabilizing cap forms. Below the cap, tubulin dimers are in GDP-bound state, owing to GTPase activity of alpha-tubulin. In Giardia intestinalis (Giardia lamblia), this protein is Tubulin beta chain.